A 466-amino-acid chain; its full sequence is MNGGTFTTGKEKERAGIYFNFKTTAQERVSLSERGTVALPVASSWGEAKTFVSISSVEDLNKKVGLSIDDPSLLLLREAKKNAKTVLMYRLTEGVRASADIAEGVKATAVYGGTKGNDIIIRINQNVLDANSFDVTTYMDESEVDKQTVKKAEELTANGYVTFTGTGDLSSTIPLTGSEGDTAAETLNASAGIRLSGGTDKAPVNSDYTDFLAAAETESFDVIALPVAEGDQLKATFAAFIKRLRDGQGQKVQGVTANYAGDYEGIINVTEGVLLEDGTEVTPDKATAWVAGASAGATFNQSLTFVEYEGAVDVLHRLDHDTIVERLGKGEFLFTFDARDKSVSVEKDINSLVTFTAEKNKKFAKNKIVRVLDAVNNDLTRELKALIKSRKGSGSDIPASEDGLQYVKTMITQYMTTLQDAGGITGFDSDEDITISMNEDRDGFLIDLAVQPVDAAEKFYFNVEVN.

The protein belongs to the myoviridae tail sheath protein family.

This Bacillus subtilis (strain 168) protein is Phage-like element PBSX protein XkdK (xkdK).